Consider the following 443-residue polypeptide: uncharacterized protein (443 aa).

The tract at residues Met-1–Met-21 is disordered. The span at Gln-10 to Asp-20 shows a compositional bias: polar residues.

This is an uncharacterized protein from Caenorhabditis elegans.